The sequence spans 201 residues: Recombination protein RecR (201 aa).

The C4-type zinc-finger motif lies at 59–74 (CKICGNIDTENICRIC). The region spanning 82 to 177 (SIIAIVETVA…KISRLASGIP (96 aa)) is the Toprim domain.

It belongs to the RecR family.

Functionally, may play a role in DNA repair. It seems to be involved in an RecBC-independent recombinational process of DNA repair. It may act with RecF and RecO. This chain is Recombination protein RecR, found in Rickettsia massiliae (strain Mtu5).